Here is a 222-residue protein sequence, read N- to C-terminus: Countin-3 (222 aa).

The signal sequence occupies residues 1 to 20; that stretch reads MNKILSLFLITILLISKVMS. Residues 21–105 enclose the Saposin B-type domain; sequence SSEECKLCTD…ESVKMCQYND (85 aa). Cystine bridges form between Cys-25-Cys-101, Cys-28-Cys-95, and Cys-56-Cys-68. N-linked (GlcNAc...) asparagine glycosylation is found at Asn-108, Asn-134, and Asn-218.

It belongs to the countin family.

It localises to the secreted. Functionally, may control the size of the multicellular structure. The chain is Countin-3 (ctnC) from Dictyostelium discoideum (Social amoeba).